The chain runs to 427 residues: Glutamate-1-semialdehyde 2,1-aminomutase (427 aa).

Lys-267 is modified (N6-(pyridoxal phosphate)lysine).

Belongs to the class-III pyridoxal-phosphate-dependent aminotransferase family. HemL subfamily. In terms of assembly, homodimer. Pyridoxal 5'-phosphate is required as a cofactor.

It is found in the cytoplasm. The catalysed reaction is (S)-4-amino-5-oxopentanoate = 5-aminolevulinate. Its pathway is porphyrin-containing compound metabolism; protoporphyrin-IX biosynthesis; 5-aminolevulinate from L-glutamyl-tRNA(Glu): step 2/2. In Thermodesulfovibrio yellowstonii (strain ATCC 51303 / DSM 11347 / YP87), this protein is Glutamate-1-semialdehyde 2,1-aminomutase.